Here is a 337-residue protein sequence, read N- to C-terminus: Heat-inducible transcription repressor HrcA (337 aa).

The protein belongs to the HrcA family.

Functionally, negative regulator of class I heat shock genes (grpE-dnaK-dnaJ and groELS operons). Prevents heat-shock induction of these operons. The chain is Heat-inducible transcription repressor HrcA from Metamycoplasma arthritidis (strain 158L3-1) (Mycoplasma arthritidis).